A 347-amino-acid chain; its full sequence is NADH-ubiquinone oxidoreductase chain 2 (347 aa).

10 helical membrane passes run 13 to 33 (VILG…WIGF), 59 to 79 (YFFT…LNLM), 96 to 116 (MIMT…FWVP), 122 to 142 (IPLS…LTVL), 149 to 169 (INLT…GWGG), 178 to 198 (IMAY…IYNP), 200 to 220 (MTLL…MLFM), 240 to 260 (IVTI…LTGF), 276 to 296 (IILP…YMRL), and 325 to 345 (LLTP…MIII).

It belongs to the complex I subunit 2 family. In terms of assembly, core subunit of respiratory chain NADH dehydrogenase (Complex I) which is composed of 45 different subunits. Interacts with TMEM242.

It localises to the mitochondrion inner membrane. It carries out the reaction a ubiquinone + NADH + 5 H(+)(in) = a ubiquinol + NAD(+) + 4 H(+)(out). In terms of biological role, core subunit of the mitochondrial membrane respiratory chain NADH dehydrogenase (Complex I) which catalyzes electron transfer from NADH through the respiratory chain, using ubiquinone as an electron acceptor. Essential for the catalytic activity and assembly of complex I. This chain is NADH-ubiquinone oxidoreductase chain 2, found in Molossus ater (Black mastiff bat).